The sequence spans 434 residues: MQSEAQSPRSSQICSTEPVFGGHAPRRVSHAVDVRWGGTLVTIGGAAPVRVQSMTNTDTADAIGTAIQVKELANAGSELVRITVNTPEAAAAVPAIREQLDRMGVTVPLVGDFHYNGHLLLRDYPDCAQALSKYRINPGNVGQGAKRDSQFAQMIEAAIKYDKPVRIGVNWGSLDQDLLARMMDENGARAEPWEAQSVMYEALIQSAIGSAERAVELGLGRDKIVLSCKVSGVQDLVAVYRELSRRCGFALHLGLTEAGMGSKGIVASTAAIGLLLQEGIGDTIRISLTPEPGAPRTGEVVVGQEILQTMGLRSFAPMVVACPGCGRTTSTLFQELALRIQTYLREQMPVWRSEYPGVEKMNVAVMGCIVNGPGESKHANIGISLPGSGENPAAPVFVDGEKVKTLRGEHIAEEFQQIVSDYVARTYGRAAAQN.

Over residues 1 to 15 (MQSEAQSPRSSQICS) the composition is skewed to polar residues. A disordered region spans residues 1 to 20 (MQSEAQSPRSSQICSTEPVF). The [4Fe-4S] cluster site is built by Cys322, Cys325, Cys368, and Glu375.

The protein belongs to the IspG family. The cofactor is [4Fe-4S] cluster.

It carries out the reaction (2E)-4-hydroxy-3-methylbut-2-enyl diphosphate + oxidized [flavodoxin] + H2O + 2 H(+) = 2-C-methyl-D-erythritol 2,4-cyclic diphosphate + reduced [flavodoxin]. Its pathway is isoprenoid biosynthesis; isopentenyl diphosphate biosynthesis via DXP pathway; isopentenyl diphosphate from 1-deoxy-D-xylulose 5-phosphate: step 5/6. In terms of biological role, converts 2C-methyl-D-erythritol 2,4-cyclodiphosphate (ME-2,4cPP) into 1-hydroxy-2-methyl-2-(E)-butenyl 4-diphosphate. This Burkholderia mallei (strain ATCC 23344) protein is 4-hydroxy-3-methylbut-2-en-1-yl diphosphate synthase (flavodoxin).